We begin with the raw amino-acid sequence, 399 residues long: MKENIDKLLSNIAIMEPPLGLQDKLALARQENRKLTIKLGFDPTAPDLHLGHAVVLQKLKDFQDEGHRIVVIIGDFTAGIGDPTGRNKLRPPLTPEQINKNSQTYINQLAKVINIENIEIRKNSEWFNNMPFSNVIKLISKITLAQIMHRDDFKTRFESKAPVHLHEIIYPILQGYDSVMIDADIELGGTDQLFNNLVGRTLQEAYEKKGQIVITMPLLEGLDGIEKMSKSKNNYIGLTDNANDMYGKVMSIPDSVIINYLTLATDMEAEKQSAIVSQLELGLNPMKIKKDIAYNIVKRYHDDISAKEATEHFERVVQKRTPEEADHDVLILPKGSYITLLDLCSVALPAISRSELRRLIRSGAVRVDKSKEDDEIKNIEVIPGTLIWIGKRYKFRIGS.

The 'HIGH' region motif lies at 43 to 52 (PTAPDLHLGH). The short motif at 227-231 (KMSKS) is the 'KMSKS' region element. K230 lines the ATP pocket. An S4 RNA-binding domain is found at 338–398 (ITLLDLCSVA…IGKRYKFRIG (61 aa)).

The protein belongs to the class-I aminoacyl-tRNA synthetase family. TyrS type 2 subfamily. Homodimer.

It is found in the cytoplasm. The catalysed reaction is tRNA(Tyr) + L-tyrosine + ATP = L-tyrosyl-tRNA(Tyr) + AMP + diphosphate + H(+). In terms of biological role, catalyzes the attachment of tyrosine to tRNA(Tyr) in a two-step reaction: tyrosine is first activated by ATP to form Tyr-AMP and then transferred to the acceptor end of tRNA(Tyr). The protein is Tyrosine--tRNA ligase 2 of Photorhabdus laumondii subsp. laumondii (strain DSM 15139 / CIP 105565 / TT01) (Photorhabdus luminescens subsp. laumondii).